Here is a 414-residue protein sequence, read N- to C-terminus: tRNA methyltransferase 10 homolog C (414 aa).

The N-terminal 35 residues, 1–35, are a transit peptide targeting the mitochondrion; it reads MNVTVRFLRPFARYLVPYTFHRTRSNSYSRVLQRY. Ser-79 is subject to Phosphoserine. Residues 133–162 adopt a coiled-coil conformation; sequence GKEMMKKAKQMKKEMKAAAREEAKRARSLE. Residues 186-378 enclose the SAM-dependent MTase TRM10-type domain; sequence LGWKGVQAMQ…KFVPRRKHTG (193 aa).

The protein belongs to the class IV-like SAM-binding methyltransferase superfamily. TRM10 family. Component of mitochondrial ribonuclease P, a complex composed of TRMT10C/MRPP1, HSD17B10/MRPP2 and PRORP/MRPP3. Interacts with HSD17B10/MRPP2; forming the MRPP1-MRPP2 subcomplex of the mitochondrial ribonuclease P complex. Interacts with GRSF1.

The protein localises to the mitochondrion matrix. Its subcellular location is the mitochondrion nucleoid. The enzyme catalyses adenosine(9) in tRNA + S-adenosyl-L-methionine = N(1)-methyladenosine(9) in tRNA + S-adenosyl-L-homocysteine + H(+). It catalyses the reaction guanosine(9) in tRNA + S-adenosyl-L-methionine = N(1)-methylguanosine(9) in tRNA + S-adenosyl-L-homocysteine + H(+). The catalysed reaction is an adenosine in mRNA + S-adenosyl-L-methionine = an N(1)-methyladenosine in mRNA + S-adenosyl-L-homocysteine + H(+). Mitochondrial tRNA N(1)-methyltransferase involved in mitochondrial tRNA maturation. Component of mitochondrial ribonuclease P, a complex composed of TRMT10C/MRPP1, HSD17B10/MRPP2 and PRORP/MRPP3, which cleaves tRNA molecules in their 5'-ends. Together with HSD17B10/MRPP2, forms a subcomplex of the mitochondrial ribonuclease P, named MRPP1-MRPP2 subcomplex, which displays functions that are independent of the ribonuclease P activity. The MRPP1-MRPP2 subcomplex catalyzes the formation of N(1)-methylguanine and N(1)-methyladenine at position 9 (m1G9 and m1A9, respectively) in tRNAs; TRMT10C/MRPP1 acting as the catalytic N(1)-methyltransferase subunit. The MRPP1-MRPP2 subcomplex also acts as a tRNA maturation platform: following 5'-end cleavage by the mitochondrial ribonuclease P complex, the MRPP1-MRPP2 subcomplex enhances the efficiency of 3'-processing catalyzed by ELAC2, retains the tRNA product after ELAC2 processing and presents the nascent tRNA to the mitochondrial CCA tRNA nucleotidyltransferase TRNT1 enzyme. In addition to tRNA N(1)-methyltransferase activity, TRMT10C/MRPP1 also acts as a mRNA N(1)-methyltransferase by mediating methylation of adenosine residues at the N(1) position of MT-ND5 mRNA. Associates with mitochondrial DNA complexes at the nucleoids to initiate RNA processing and ribosome assembly. The protein is tRNA methyltransferase 10 homolog C of Rattus norvegicus (Rat).